A 235-amino-acid chain; its full sequence is 5'-methylthioadenosine/S-adenosylhomocysteine nucleosidase (235 aa).

The active-site Proton acceptor is the Glu-12. Residues Gly-78, Met-153, and 174–175 (ME) contribute to the substrate site. Asp-198 acts as the Proton donor in catalysis.

This sequence belongs to the PNP/UDP phosphorylase family. MtnN subfamily.

The catalysed reaction is S-adenosyl-L-homocysteine + H2O = S-(5-deoxy-D-ribos-5-yl)-L-homocysteine + adenine. It catalyses the reaction S-methyl-5'-thioadenosine + H2O = 5-(methylsulfanyl)-D-ribose + adenine. It carries out the reaction 5'-deoxyadenosine + H2O = 5-deoxy-D-ribose + adenine. Its pathway is amino-acid biosynthesis; L-methionine biosynthesis via salvage pathway; S-methyl-5-thio-alpha-D-ribose 1-phosphate from S-methyl-5'-thioadenosine (hydrolase route): step 1/2. Functionally, catalyzes the irreversible cleavage of the glycosidic bond in both 5'-methylthioadenosine (MTA) and S-adenosylhomocysteine (SAH/AdoHcy) to adenine and the corresponding thioribose, 5'-methylthioribose and S-ribosylhomocysteine, respectively. Also cleaves 5'-deoxyadenosine, a toxic by-product of radical S-adenosylmethionine (SAM) enzymes, into 5-deoxyribose and adenine. The protein is 5'-methylthioadenosine/S-adenosylhomocysteine nucleosidase of Geobacillus kaustophilus (strain HTA426).